A 354-amino-acid polypeptide reads, in one-letter code: Galactoside alpha-(1,2)-fucosyltransferase 2 (354 aa).

Over 1 to 5 (MASAQ) the chain is Cytoplasmic. The helical; Signal-anchor for type II membrane protein transmembrane segment at 6–26 (VPFSFPLAHFLIFVFVTSTIT) threads the bilayer. Topologically, residues 27 to 354 (HLQQRIVKLQ…PADLSPLLKH (328 aa)) are lumenal. A disordered region spans residues 43–68 (LPMTTQMSSGNTESPEMRRDSEQHGN). Polar residues predominate over residues 45–56 (MTTQMSSGNTES). Positions 57–68 (PEMRRDSEQHGN) are enriched in basic and acidic residues. Asparagine 199 carries an N-linked (GlcNAc...) asparagine glycan.

The protein belongs to the glycosyltransferase 11 family. As to expression, specifically expressed in gut.

Its subcellular location is the golgi apparatus. The protein resides in the golgi stack membrane. The enzyme catalyses a beta-D-galactosyl-(1-&gt;3)-N-acetyl-beta-D-glucosaminyl derivative + GDP-beta-L-fucose = an alpha-L-Fuc-(1-&gt;2)-beta-D-Gal-(1-&gt;3)-beta-D-GlcNAc derivative + GDP + H(+). It carries out the reaction a beta-D-galactosyl-(1-&gt;4)-N-acetyl-beta-D-glucosaminyl derivative + GDP-beta-L-fucose = an alpha-L-Fuc-(1-&gt;2)-beta-D-Gal-(1-&gt;4)-beta-D-GlcNAc derivative + GDP + H(+). It catalyses the reaction a ganglioside GM1 (d18:1(4E)) + GDP-beta-L-fucose = a ganglioside Fuc-GM1 (d18:1(4E)) + GDP + H(+). The catalysed reaction is a globoside GalGb4Cer (d18:1(4E)) + GDP-beta-L-fucose = a globoside Globo-H (d18:1(4E)) + GDP + H(+). The enzyme catalyses a neolactoside nLc4Cer + GDP-beta-L-fucose = a neolactoside IV(2)-alpha-Fuc-nLc4Cer + GDP + H(+). It carries out the reaction a neolactoside nLc4Cer(d18:1(4E)) + GDP-beta-L-fucose = a neolactoside IV(2)-alpha-Fuc-nLc4Cer(d18:1(4E)) + GDP + H(+). It catalyses the reaction a ganglioside GM1 + GDP-beta-L-fucose = a ganglioside Fuc-GM1 + GDP + H(+). The catalysed reaction is a ganglioside GA1 + GDP-beta-L-fucose = a ganglioside Fuc-GA1 + GDP + H(+). The enzyme catalyses Lc4Cer + GDP-beta-L-fucose = alpha-L-fucosyl-(1-&gt;2)-beta-D-galactosyl-(1-&gt;3)-N-acetyl-beta-D-glucosaminyl-(1-&gt;3)-beta-D-galactosyl-(1-&gt;4)-beta-D-glucosyl-(1&lt;-&gt;1')-ceramide + GDP + H(+). It carries out the reaction a beta-D-Gal-(1-&gt;3)-beta-D-GlcNAc-(1-&gt;3)-beta-D-Gal-(1-&gt;4)-beta-D-Glc-(1&lt;-&gt;1')-Cer(d18:1(4E)) + GDP-beta-L-fucose = alpha-L-fucosyl-(1-&gt;2)- beta-D-galactosyl-(1-&gt;3)-N-acetyl-beta-D-glucosaminyl-(1-&gt;3)-beta-D-galactosyl-(1-&gt;4)-beta-D-glucosyl-(1&lt;-&gt;1')-N-acylsphing-4-enine + GDP + H(+). It catalyses the reaction a ganglioside GD1b + GDP-beta-L-fucose = a ganglioside Fuc-GD1b + GDP + H(+). The catalysed reaction is a lactoside III(4)-a-Fuc-Lc4Cer + GDP-beta-L-fucose = a lactoside IV(2),III(4)-a-[Fuc]2-Lc4Cer + GDP + H(+). The enzyme catalyses beta-D-galactosyl-(1-&gt;3)-N-acetyl-D-galactosamine + GDP-beta-L-fucose = alpha-L-fucosyl-(1-&gt;2)-beta-D-galactosyl-(1-&gt;3)-N-acetyl-D-galactosamine + GDP + H(+). The protein operates within protein modification; protein glycosylation. In terms of biological role, catalyzes the transfer of L-fucose, from a guanosine diphosphate-beta-L-fucose, to the terminal galactose on both O- and N-linked glycans chains of cell surface glycoproteins and glycolipids and the resulting epitope regulates several processes such as cell-cell interaction including host-microbe interaction, cell surface expression and cell proliferation. Preferentially fucosylates gangliosides GA1 and GM1 in the antrum, cecum and colon and in the female reproductive organs. Fucosylated host glycoproteins or glycolipids mediate interaction with intestinal microbiota influencing its composition. Creates a soluble precursor oligosaccharide FuC-alpha ((1,2)Galbeta-) called the H antigen which is an essential substrate for the final step in the soluble ABO blood group antigen synthesis pathway. The polypeptide is Galactoside alpha-(1,2)-fucosyltransferase 2 (Rattus norvegicus (Rat)).